The sequence spans 305 residues: Methionyl-tRNA formyltransferase (305 aa).

111–114 (SLLP) serves as a coordination point for (6S)-5,6,7,8-tetrahydrofolate.

Belongs to the Fmt family.

It catalyses the reaction L-methionyl-tRNA(fMet) + (6R)-10-formyltetrahydrofolate = N-formyl-L-methionyl-tRNA(fMet) + (6S)-5,6,7,8-tetrahydrofolate + H(+). In terms of biological role, attaches a formyl group to the free amino group of methionyl-tRNA(fMet). The formyl group appears to play a dual role in the initiator identity of N-formylmethionyl-tRNA by promoting its recognition by IF2 and preventing the misappropriation of this tRNA by the elongation apparatus. The sequence is that of Methionyl-tRNA formyltransferase from Campylobacter jejuni subsp. jejuni serotype O:2 (strain ATCC 700819 / NCTC 11168).